The primary structure comprises 832 residues: Mechanosensitive cation channel TMEM63B (832 aa).

The Extracellular portion of the chain corresponds to 1-40; sequence MLPFLLATLGTTALNNSNPKDYCYSARIRSTVLQGLPFGG. Residues 41 to 65 form a helical membrane-spanning segment; sequence VPTVLALDFMCFLALLFLFSILRKV. Residue Cys51 is the site of S-palmitoyl cysteine attachment. The Cytoplasmic segment spans residues 66–145; the sequence is AWDYGRLALV…KDDEIRDKCG (80 aa). The Mediates endoplasmic reticulum retention motif lies at 86 to 88; the sequence is RDR. Phosphoserine occurs at positions 111, 113, 114, and 115. A lipid anchor (S-palmitoyl cysteine) is attached at Cys126. The chain crosses the membrane as a helical span at residues 146–178; it reads GDAVHYLSFQRHIIGLLVVVGVLSVGIVLPVNF. Over 179 to 202 the chain is Extracellular; the sequence is SGDLLENNAYSFGRTTIANLKSGN. The chain crosses the membrane as a helical span at residues 203-227; that stretch reads NLLWLHTSFAFLYLLLTVYSMRRHT. Over 228–427 the chain is Cytoplasmic; it reads SKMRYKEDDL…IYWEHLSIRG (200 aa). Positions 231 to 426 are intracellular linker IL2; confers mechanosensitivity; that stretch reads RYKEDDLVKR…NIYWEHLSIR (196 aa). Residues Cys382 and Cys398 are each lipidated (S-palmitoyl cysteine). Residues 428–457 traverse the membrane as a helical segment; the sequence is FIWWLRCLVINVVLFILLFFLTTPAIIITT. The Extracellular portion of the chain corresponds to 458 to 472; the sequence is MDKFNVTKPVEYLNN. N-linked (GlcNAc...) asparagine glycosylation is present at Asn462. Residues 473–502 form a helical membrane-spanning segment; that stretch reads PIITQFFPTLLLWCFSALLPTIVYYSAFFE. Topologically, residues 503 to 506 are cytoplasmic; it reads AHWT. The helical transmembrane segment at 507–543 threads the bilayer; the sequence is RSGENRTTMHKCYTFLIFMVLLLPSLGLSSLDLFFRW. Residues 544 to 566 are Extracellular-facing; the sequence is LFDKKFLAEAAIRFECVFLPDNG. Residues 567-599 form a helical membrane-spanning segment; it reads AFFVNYVIASAFIGNAMDLLRIPGLLMYMIRLC. The interval 567 to 599 is gating helix; it reads AFFVNYVIASAFIGNAMDLLRIPGLLMYMIRLC. Residues 600-619 are Cytoplasmic-facing; sequence LARSAAERRNVKRHQAYEFQ. The helical transmembrane segment at 620 to 638 threads the bilayer; that stretch reads FGAAYAWMMCVFTVVMTYS. At 639–641 the chain is on the extracellular side; sequence ITC. A helical transmembrane segment spans residues 642-666; that stretch reads PIIVPFGLMYMLLKHLVDRYNLYYA. The Cytoplasmic portion of the chain corresponds to 667-673; that stretch reads YLPAKLD. A helical membrane pass occupies residues 674-702; sequence KKIHSGAVNQVVAAPILCLFWLLFFSTMR. Over 703 to 707 the chain is Extracellular; it reads TGFLA. The helical transmembrane segment at 708 to 728 threads the bilayer; it reads PTSMFTFVVLVITIVICLCHV. 2 S-palmitoyl cysteine lipidation sites follow: Cys726 and Cys729. Topologically, residues 729–832 are cytoplasmic; that stretch reads CFGHFKYLSA…DSLIENEIHQ (104 aa). Positions 780 to 814 are disordered; that stretch reads EVDGDGDGAPGSSGDEPPSSSSQDEELLMPPDALT. Over residues 789–801 the composition is skewed to low complexity; that stretch reads PGSSGDEPPSSSS.

Belongs to the CSC1 (TC 1.A.17) family. Monomer. Interacts with SLC19A2; interaction is required for the phospholipid scramblase activity. In terms of processing, palmitoylation is required for localization to the plasma membrane and stability. Post-translationally, N-Glycosylated.

The protein resides in the cell membrane. It is found in the endoplasmic reticulum membrane. It localises to the lysosome membrane. The protein localises to the early endosome membrane. It catalyses the reaction Ca(2+)(in) = Ca(2+)(out). It carries out the reaction Mg(2+)(in) = Mg(2+)(out). The catalysed reaction is K(+)(in) = K(+)(out). The enzyme catalyses Na(+)(in) = Na(+)(out). It catalyses the reaction Cs(+)(in) = Cs(+)(out). It carries out the reaction a 1,2-diacyl-sn-glycero-3-phosphocholine(in) = a 1,2-diacyl-sn-glycero-3-phosphocholine(out). The catalysed reaction is a sphingomyelin(in) = a sphingomyelin(out). Functionally, mechanosensitive cation channel with low conductance and high activation threshold. Osmosensitive cation channel preferentially activated by hypotonic stress. Also acts as a phospholipid scramblase in response to changes in membrane structure: upon changes in membrane curvature and thickness, alters its conformation and translocates phospholipids, such as phosphatidylcholine and sphingomyelin, thereby controlling plasma membrane lipid distribution. Forms a heterodimer with SLC19A2, which mediates phospholipid scramblase activity following Ca(2+) stimulation. Expressed in excitatory neurons of the subfornical organ and functions as a thirst receptor that mediates neuronal response to hyperosmolality to drive thirst and drinking behavior. Facilitates intestinal motility by promoting proliferation of intestinal stem cells. Essential for the baby's first breath and respiration throughout life. Upon lung inflation conducts cation currents in alveolar type 1 and 2 cells triggering lamellar body exocytosis and surfactant secretion into airspace. Acts as an osmosensor in cochlear outer hair cells (OHCs) where it mediates calcium influx and regulatory volume decrease response. Required for the maintenance of OHC morphology, OHC survival and normal hearing. In Homo sapiens (Human), this protein is Mechanosensitive cation channel TMEM63B.